We begin with the raw amino-acid sequence, 427 residues long: 3-phosphoshikimate 1-carboxyvinyltransferase (427 aa).

Lysine 22, serine 23, and arginine 27 together coordinate 3-phosphoshikimate. A phosphoenolpyruvate-binding site is contributed by lysine 22. 2 residues coordinate phosphoenolpyruvate: glycine 96 and arginine 124. 3-phosphoshikimate contacts are provided by serine 169, serine 170, glutamine 171, serine 197, aspartate 313, asparagine 336, and lysine 340. Glutamine 171 contacts phosphoenolpyruvate. Residue aspartate 313 is the Proton acceptor of the active site. Positions 344, 386, and 411 each coordinate phosphoenolpyruvate.

The protein belongs to the EPSP synthase family. As to quaternary structure, monomer.

It is found in the cytoplasm. It carries out the reaction 3-phosphoshikimate + phosphoenolpyruvate = 5-O-(1-carboxyvinyl)-3-phosphoshikimate + phosphate. The protein operates within metabolic intermediate biosynthesis; chorismate biosynthesis; chorismate from D-erythrose 4-phosphate and phosphoenolpyruvate: step 6/7. Catalyzes the transfer of the enolpyruvyl moiety of phosphoenolpyruvate (PEP) to the 5-hydroxyl of shikimate-3-phosphate (S3P) to produce enolpyruvyl shikimate-3-phosphate and inorganic phosphate. The protein is 3-phosphoshikimate 1-carboxyvinyltransferase of Salmonella typhimurium (strain LT2 / SGSC1412 / ATCC 700720).